A 257-amino-acid polypeptide reads, in one-letter code: MLLAIEQGNTNTLFAVHDGERWIAQWRAATDSTRTADEYAVWLSQLLSMAGLALGAFDGCIISSVVPQSIFNLRNLSRRYLHVEPLVIGENAELGIPIRIDKPSEAGADRLVNAIGAHIAYPGPLIVIDSGTATTFDVIAADGGFEGGVIAPGINLSMEALHTAAAKLPRVAIQKPQKVVGTDTVGAMQAGVFWGYIALIEGLIARIKAERDEPLTVVATGGVASLFHGATAAIDKFDPDLTIRGMLEIWRRNQAKA.

An ATP-binding site is contributed by 6-13 (EQGNTNTL). 107–110 (GADR) provides a ligand contact to substrate. Residue Asp-109 is the Proton acceptor of the active site. A K(+)-binding site is contributed by Asp-129. Thr-132 is a binding site for ATP. Thr-184 serves as a coordination point for substrate.

Belongs to the type III pantothenate kinase family. In terms of assembly, homodimer. NH4(+) serves as cofactor. The cofactor is K(+).

The protein resides in the cytoplasm. It carries out the reaction (R)-pantothenate + ATP = (R)-4'-phosphopantothenate + ADP + H(+). The protein operates within cofactor biosynthesis; coenzyme A biosynthesis; CoA from (R)-pantothenate: step 1/5. Catalyzes the phosphorylation of pantothenate (Pan), the first step in CoA biosynthesis. The chain is Type III pantothenate kinase from Phenylobacterium zucineum (strain HLK1).